Reading from the N-terminus, the 463-residue chain is Mitochondrial dynamics protein MID49 (463 aa).

At 1–24 (MAELQIRKKEKKSGDGIGTMVDFL) the chain is on the mitochondrial intermembrane side. A helical membrane pass occupies residues 25-47 (LANARLVLGVGGAAMLGIATLAV). Topologically, residues 48 to 463 (KRLIDRATSP…EPDDVLKRER (416 aa)) are cytoplasmic. The segment at 87 to 119 (TLRRKEDLEHHCAPLSLPDPSQKMPEATGTSQV) is disordered. The span at 89–98 (RRKEDLEHHC) shows a compositional bias: basic and acidic residues.

It belongs to the MID49/MID51 family.

The protein resides in the mitochondrion outer membrane. In terms of biological role, mitochondrial outer membrane protein which regulates mitochondrial organization. It is required for mitochondrial fission and promotes the recruitment and association of the fission mediator dynamin-related protein 1 (DNM1L) to the mitochondrial surface independently of the mitochondrial fission FIS1 and MFF proteins. Regulates DNM1L GTPase activity. This Xenopus laevis (African clawed frog) protein is Mitochondrial dynamics protein MID49 (mief2).